The following is a 498-amino-acid chain: DNA primase (498 aa).

Residues 35-59 (CPFHPDDTPSFYVSPSKQIFKCFGC) form a CHC2-type zinc finger. A Toprim domain is found at 243-324 (GFAILVEGYF…EVYPVYLPEG (82 aa)). 3 residues coordinate Mg(2+): Glu-249, Asp-293, and Asp-295.

This sequence belongs to the DnaG primase family. As to quaternary structure, monomer. Interacts with DnaB. Requires Zn(2+) as cofactor. Mg(2+) serves as cofactor.

The catalysed reaction is ssDNA + n NTP = ssDNA/pppN(pN)n-1 hybrid + (n-1) diphosphate.. Its function is as follows. RNA polymerase that catalyzes the synthesis of short RNA molecules used as primers for DNA polymerase during DNA replication. The protein is DNA primase of Aquifex aeolicus (strain VF5).